Consider the following 1302-residue polypeptide: Neuroglian (1302 aa).

Positions 1 to 23 (MWRQSTILAALLVALLCAGSAES) are cleaved as a signal peptide. Residues 24–1138 (KGNRPPRITK…ANAGWFIGMM (1115 aa)) lie on the Extracellular side of the membrane. 6 Ig-like C2-type domains span residues 29–133 (PRIT…AELN), 134–225 (AFKD…YKIG), 245–330 (PPVR…QSFS), 339–426 (PYFT…VYLN), 432–524 (PTIS…TRIT), and 521–610 (TRIT…ANLI). 4 cysteine pairs are disulfide-bonded: Cys-59-Cys-111, Cys-155-Cys-212, Cys-268-Cys-317, and Cys-360-Cys-410. N-linked (GlcNAc...) asparagine glycans are attached at residues Asn-182 and Asn-198. 2 N-linked (GlcNAc...) asparagine glycosylation sites follow: Asn-411 and Asn-448. 5 consecutive Fibronectin type-III domains span residues 614–711 (VPNA…TQPD), 716–813 (NPDN…SGED), 818–915 (APTN…TPEG), 916–1017 (VPSP…LKDA), and 1021–1119 (APAT…TVEG). Cys-625 and Cys-706 are oxidised to a cystine. 2 N-linked (GlcNAc...) asparagine glycosylation sites follow: Asn-652 and Asn-683. The N-linked (GlcNAc...) asparagine glycan is linked to Asn-821. N-linked (GlcNAc...) asparagine glycosylation is present at Asn-1125. Residues 1139–1154 (LALAFIIILFIIICII) traverse the membrane as a helical segment. Residues 1155–1302 (RRNRGGKYDV…AAAGAVATYV (148 aa)) are Cytoplasmic-facing. Basic and acidic residues predominate over residues 1172 to 1182 (GRRDYPEEGGF). Disordered stretches follow at residues 1172–1223 (GRRD…GDTG) and 1236–1291 (VPGK…ASNG). Positions 1188-1203 (PLDNKSAGRQSVSSAN) are enriched in polar residues. The span at 1253-1275 (AAAHQAAPTAGGSGAAGSAAAAG) shows a compositional bias: low complexity.

Forms a complex with Nrx-IV/Nrx and Cont. Forms a complex composed of septate junction proteins Nrx-IV/Nrx, Tsf2/MTf, Cont and Nrg during late embryogenesis. Restricted to the surface of neurons and glia in the developing nervous system. As to expression, restricted to non-neuronal tissues.

Its subcellular location is the cell membrane. The protein localises to the cell junction. It localises to the septate junction. Its function is as follows. Essential for septate junctions. Septate junctions, which are the equivalent of vertebrate tight junctions, are characterized by regular arrays of transverse structures that span the intermembrane space and form a physical barrier to diffusion. Required for formation of the hemolymph-brain barrier (the insect blood-brain barrier). Vital for embryonic development. Involved in the targeting for degradation or recycling of certain septate junction components, including kune and bou/boudin, by regulating their endocytosis. Functionally, may play a role in neural and glial cell adhesion in the developing embryo. May be a more general cell adhesion molecule involved in non-neuronal tissues and imaginal disk morphogenesis. This Drosophila melanogaster (Fruit fly) protein is Neuroglian (Nrg).